Consider the following 215-residue polypeptide: L-fuculose phosphate aldolase (215 aa).

Residues Gly-28–Asn-29, Thr-43–Gly-44, and Ser-71–Ser-72 each bind substrate. Glu-73 functions as the Proton donor/acceptor in the catalytic mechanism. Residues Glu-73, His-92, His-94, and His-155 each contribute to the Zn(2+) site.

Belongs to the aldolase class II family. AraD/FucA subfamily. In terms of assembly, homotetramer. The cofactor is Zn(2+).

The enzyme catalyses L-fuculose 1-phosphate = (S)-lactaldehyde + dihydroxyacetone phosphate. Its pathway is carbohydrate degradation; L-fucose degradation; L-lactaldehyde and glycerone phosphate from L-fucose: step 3/3. Involved in the degradation of L-fucose and D-arabinose. Catalyzes the reversible cleavage of L-fuculose 1-phosphate (Fuc1P) to yield dihydroxyacetone phosphate (DHAP) and L-lactaldehyde. The polypeptide is L-fuculose phosphate aldolase (Escherichia coli O157:H7).